Here is a 256-residue protein sequence, read N- to C-terminus: Mannose-specific lectin 1 (256 aa).

An N-terminal signal peptide occupies residues 1–23; it reads MAKLLLFLLPAILGLLVPRSAVA. Bulb-type lectin domains follow at residues 26–131 and 145–252; these read TNYL…PWVR and NNLL…SKRS. Beta-D-mannose is bound by residues 51–55, Tyr-59, Trp-63, Gln-64, 170–174, Tyr-178, and 182–185; these read QDDCN, QGDCN, and YGWQ. The Carbohydrate-binding motif 1 motif lies at 51 to 59; sequence QDDCNLVLY. 2 disulfide bridges follow: Cys-54/Cys-74 and Cys-173/Cys-195. The Carbohydrate-binding motif 2 signature appears at 170–178; it reads QGDCNLVLY.

As to quaternary structure, forms heterodimers.

It localises to the secreted. Mannose-specific lectin. Shows agglutinating activity towards erythrocytes from rabbit. This chain is Mannose-specific lectin 1, found in Remusatia vivipara (Hitchhiker elephant ear).